The chain runs to 502 residues: Glutamate decarboxylase (502 aa).

N6-(pyridoxal phosphate)lysine is present on Lys-278. A calmodulin-binding region spans residues 471–502 (GLHHFHMDTVETQKDIIKHWRKIAGKKTSGVC).

This sequence belongs to the group II decarboxylase family. Requires pyridoxal 5'-phosphate as cofactor.

The enzyme catalyses L-glutamate + H(+) = 4-aminobutanoate + CO2. Its function is as follows. Catalyzes the production of GABA. The calmodulin-binding is calcium-dependent and it is proposed that this may, directly or indirectly, form a calcium regulated control of GABA biosynthesis. The sequence is that of Glutamate decarboxylase from Solanum lycopersicum (Tomato).